The chain runs to 126 residues: Glycine cleavage system H protein (126 aa).

Residues threonine 23–lysine 104 form the Lipoyl-binding domain. Position 64 is an N6-lipoyllysine (lysine 64).

The protein belongs to the GcvH family. As to quaternary structure, the glycine cleavage system is composed of four proteins: P, T, L and H. It depends on (R)-lipoate as a cofactor.

The glycine cleavage system catalyzes the degradation of glycine. The H protein shuttles the methylamine group of glycine from the P protein to the T protein. The sequence is that of Glycine cleavage system H protein from Paraburkholderia phytofirmans (strain DSM 17436 / LMG 22146 / PsJN) (Burkholderia phytofirmans).